A 570-amino-acid polypeptide reads, in one-letter code: Hydroxylamine reductase (570 aa).

Residues cysteine 5, cysteine 8, cysteine 17, and cysteine 23 each contribute to the [4Fe-4S] cluster site. Residues histidine 266, glutamate 290, cysteine 334, cysteine 425, cysteine 453, cysteine 478, glutamate 513, and lysine 515 each coordinate hybrid [4Fe-2O-2S] cluster. Cysteine 425 carries the cysteine persulfide modification.

The protein belongs to the HCP family. [4Fe-4S] cluster is required as a cofactor. Requires hybrid [4Fe-2O-2S] cluster as cofactor.

Its subcellular location is the cytoplasm. The enzyme catalyses A + NH4(+) + H2O = hydroxylamine + AH2 + H(+). In terms of biological role, catalyzes the reduction of hydroxylamine to form NH(3) and H(2)O. This chain is Hydroxylamine reductase, found in Clostridium tetani (strain Massachusetts / E88).